Reading from the N-terminus, the 182-residue chain is Lipid A acyltransferase PagP (182 aa).

An N-terminal signal peptide occupies residues 1 to 21 (MTQYFRALAFFLLLVPATAMA). Cys22 carries the N-palmitoyl cysteine lipid modification. Cys22 carries S-diacylglycerol cysteine lipidation. Residues His55, Asp98, and Ser99 contribute to the active site.

This sequence belongs to the lipid A palmitoyltransferase family. As to quaternary structure, homodimer.

The protein localises to the cell outer membrane. The catalysed reaction is a lipid A + a 1,2-diacyl-sn-glycero-3-phosphocholine = a hepta-acyl lipid A + a 2-acyl-sn-glycero-3-phosphocholine. It carries out the reaction a lipid IVA + a 1,2-diacyl-sn-glycero-3-phosphocholine = a lipid IVB + a 2-acyl-sn-glycero-3-phosphocholine. It catalyses the reaction a lipid IIA + a 1,2-diacyl-sn-glycero-3-phosphocholine = a lipid IIB + a 2-acyl-sn-glycero-3-phosphocholine. Transfers a fatty acid residue from the sn-1 position of a phospholipid to the N-linked hydroxyfatty acid chain on the proximal unit of lipid A or its precursors. Required for resistance to cationic antimicrobial peptides (CAMPs). Modifications of lipid A with an acyl chain to evade host immune defenses by resisting antibody-mediated complement lysis during respiratory infection. The protein is Lipid A acyltransferase PagP of Bordetella bronchiseptica (strain ATCC BAA-588 / NCTC 13252 / RB50) (Alcaligenes bronchisepticus).